The sequence spans 261 residues: Cytochrome c oxidase subunit 3 (261 aa).

At 1–15 (MTHQTHAYHMVNPSP) the chain is on the mitochondrial matrix side. Residues 16–34 (WPLTGALSALLMTSGLVMW) traverse the membrane as a helical segment. The Mitochondrial intermembrane portion of the chain corresponds to 35-40 (FHYNST). The chain crosses the membrane as a helical span at residues 41 to 66 (LLLTLGLTTNLLTMYQWWRDIIREST). Over 67–72 (FQGHHT) the chain is Mitochondrial matrix. The chain crosses the membrane as a helical span at residues 73–105 (PAVQKGLRYGMILFIISEVFFFSGFFWAFYHSS). The Mitochondrial intermembrane portion of the chain corresponds to 106–128 (LAPTPELGGCWPPTGIHPLNPME). Residues 129–152 (VPLLNTSVLLASGVSITWAHHSLM) form a helical membrane-spanning segment. Over 153-155 (EGN) the chain is Mitochondrial matrix. A helical membrane pass occupies residues 156 to 183 (RKHMLQALFITISLGIYFTLLQASEYYE). Over 184-190 (APFTISD) the chain is Mitochondrial intermembrane. A helical transmembrane segment spans residues 191–223 (GVYGSTFFVATGFHGLHVIIGSTFLIVCFLRQL). The Mitochondrial matrix portion of the chain corresponds to 224–232 (KFHFTSNHH). A helical membrane pass occupies residues 233–256 (FGFEAAAWYWHFVDVVWLFLYVSI). At 257-261 (YWWGS) the chain is on the mitochondrial intermembrane side.

It belongs to the cytochrome c oxidase subunit 3 family. In terms of assembly, component of the cytochrome c oxidase (complex IV, CIV), a multisubunit enzyme composed of 14 subunits. The complex is composed of a catalytic core of 3 subunits MT-CO1, MT-CO2 and MT-CO3, encoded in the mitochondrial DNA, and 11 supernumerary subunits COX4I, COX5A, COX5B, COX6A, COX6B, COX6C, COX7A, COX7B, COX7C, COX8 and NDUFA4, which are encoded in the nuclear genome. The complex exists as a monomer or a dimer and forms supercomplexes (SCs) in the inner mitochondrial membrane with NADH-ubiquinone oxidoreductase (complex I, CI) and ubiquinol-cytochrome c oxidoreductase (cytochrome b-c1 complex, complex III, CIII), resulting in different assemblies (supercomplex SCI(1)III(2)IV(1) and megacomplex MCI(2)III(2)IV(2)).

It localises to the mitochondrion inner membrane. The catalysed reaction is 4 Fe(II)-[cytochrome c] + O2 + 8 H(+)(in) = 4 Fe(III)-[cytochrome c] + 2 H2O + 4 H(+)(out). Its function is as follows. Component of the cytochrome c oxidase, the last enzyme in the mitochondrial electron transport chain which drives oxidative phosphorylation. The respiratory chain contains 3 multisubunit complexes succinate dehydrogenase (complex II, CII), ubiquinol-cytochrome c oxidoreductase (cytochrome b-c1 complex, complex III, CIII) and cytochrome c oxidase (complex IV, CIV), that cooperate to transfer electrons derived from NADH and succinate to molecular oxygen, creating an electrochemical gradient over the inner membrane that drives transmembrane transport and the ATP synthase. Cytochrome c oxidase is the component of the respiratory chain that catalyzes the reduction of oxygen to water. Electrons originating from reduced cytochrome c in the intermembrane space (IMS) are transferred via the dinuclear copper A center (CU(A)) of subunit 2 and heme A of subunit 1 to the active site in subunit 1, a binuclear center (BNC) formed by heme A3 and copper B (CU(B)). The BNC reduces molecular oxygen to 2 water molecules using 4 electrons from cytochrome c in the IMS and 4 protons from the mitochondrial matrix. The sequence is that of Cytochrome c oxidase subunit 3 (MT-CO3) from Rhinoceros unicornis (Greater Indian rhinoceros).